Consider the following 1648-residue polypeptide: Pleiotropic ABC efflux transporter of multiple drugs YBT1 (1648 aa).

The chain crosses the membrane as a helical span at residues Asn-28–Ile-48. Asn-72 carries an N-linked (GlcNAc...) asparagine glycan. Transmembrane regions (helical) follow at residues Val-140 to Glu-160, Pro-175 to Asn-195, Asn-207 to Phe-227, and Leu-250 to Leu-270. Asn-306 is a glycosylation site (N-linked (GlcNAc...) asparagine). Helical transmembrane passes span Phe-352–Val-372 and Met-392–Cys-412. An ABC transmembrane type-1 1 domain is found at Cys-361 to Gln-674. Asn-471 carries an N-linked (GlcNAc...) asparagine glycan. 2 helical membrane-spanning segments follow: residues Ile-501–Ser-521 and Ile-523–Ile-543. Asn-573 carries N-linked (GlcNAc...) asparagine glycosylation. 2 consecutive transmembrane segments (helical) span residues Val-612–Phe-632 and Leu-643–Leu-662. Positions Leu-706–Lys-947 constitute an ABC transporter 1 domain. Asn-710 carries an N-linked (GlcNAc...) asparagine glycan. Gly-741 to Thr-748 is a binding site for ATP. 2 N-linked (GlcNAc...) asparagine glycosylation sites follow: Asn-784 and Asn-798. A helical transmembrane segment spans residues Met-1012 to Leu-1032. The ABC transmembrane type-1 2 domain maps to Leu-1032–Met-1333. A glycan (N-linked (GlcNAc...) asparagine) is linked at Asn-1042. The next 3 membrane-spanning stretches (helical) occupy residues Ile-1089–Ile-1109, Ile-1168–Ile-1188, and Ala-1191–Leu-1211. N-linked (GlcNAc...) asparagine glycosylation occurs at Asn-1255. Helical transmembrane passes span Leu-1282–Ile-1302 and Gly-1305–Val-1325. One can recognise an ABC transporter 2 domain in the interval Val-1372–Glu-1622. Asn-1376 is a glycosylation site (N-linked (GlcNAc...) asparagine). Gly-1406–Ser-1413 provides a ligand contact to ATP. Asn-1503, Asn-1524, and Asn-1573 each carry an N-linked (GlcNAc...) asparagine glycan.

Belongs to the ABC transporter superfamily. ABCC family. Conjugate transporter (TC 3.A.1.208) subfamily.

It localises to the membrane. Its function is as follows. Pleiotropic ABC efflux transporter that might be involved in the resistance to azoles such as fluconazole. The polypeptide is Pleiotropic ABC efflux transporter of multiple drugs YBT1 (Candida glabrata (strain ATCC 2001 / BCRC 20586 / JCM 3761 / NBRC 0622 / NRRL Y-65 / CBS 138) (Yeast)).